Consider the following 94-residue polypeptide: Ribonuclease P protein component 1 (94 aa).

This sequence belongs to the eukaryotic/archaeal RNase P protein component 1 family. In terms of assembly, consists of a catalytic RNA component and at least 4-5 protein subunits.

Its subcellular location is the cytoplasm. The catalysed reaction is Endonucleolytic cleavage of RNA, removing 5'-extranucleotides from tRNA precursor.. In terms of biological role, part of ribonuclease P, a protein complex that generates mature tRNA molecules by cleaving their 5'-ends. In Thermofilum pendens (strain DSM 2475 / Hrk 5), this protein is Ribonuclease P protein component 1.